The chain runs to 150 residues: UPF0506 protein SJCHGC09643 (150 aa).

An N-terminal signal peptide occupies residues M1–S18. 4 N-linked (GlcNAc...) asparagine glycosylation sites follow: N20, N32, N48, and N110. 3 cysteine pairs are disulfide-bonded: C116-C130, C123-C134, and C129-C139.

It belongs to the UPF0506 family.

The protein localises to the secreted. This chain is UPF0506 protein SJCHGC09643, found in Schistosoma japonicum (Blood fluke).